We begin with the raw amino-acid sequence, 283 residues long: Protease HtpX (283 aa).

2 consecutive transmembrane segments (helical) span residues I4–V24 and G33–M53. H139 lines the Zn(2+) pocket. The active site involves E140. A Zn(2+)-binding site is contributed by H143. A run of 2 helical transmembrane segments spans residues G147–S167 and F192–W212. E218 serves as a coordination point for Zn(2+).

Belongs to the peptidase M48B family. It depends on Zn(2+) as a cofactor.

The protein localises to the cell inner membrane. This chain is Protease HtpX, found in Glaesserella parasuis serovar 5 (strain SH0165) (Haemophilus parasuis).